The primary structure comprises 144 residues: Aklanonic acid methyl ester cyclase AcmA (144 aa).

Positions 51 and 105 each coordinate substrate.

This sequence belongs to the polyketide cyclase DnrD family. As to quaternary structure, homotetramer.

It carries out the reaction methyl aklanonate = aklaviketone. It functions in the pathway antibiotic biosynthesis; daunorubicin biosynthesis. Its pathway is antibiotic biosynthesis; carminomycin biosynthesis. It participates in antibiotic biosynthesis; rhodomycin biosynthesis. The protein operates within antibiotic biosynthesis; aclacinomycin biosynthesis. Its function is as follows. Involved in the biosynthesis of aklavinone which is an important precursor common to the formation of the clinically significant anthracyclines such as carminomycin, daunorubicin (daunomycin), rhodomycin, aclacinomycin T (aklavin) and aclacinomycin A (aclarubicin). These compounds are aromatic polyketide antibiotics that exhibit high cytotoxicity and are widely applied in the chemotherapy of a variety of cancers. Catalyzes the cyclization of aklanonic acid methyl ester to yield aklaviketone. It is also able to use nogalonic acid methyl ester as substrate, but produces exclusively auraviketone with C9-R stereochemistry. The sequence is that of Aklanonic acid methyl ester cyclase AcmA (acma) from Streptomyces galilaeus.